The sequence spans 281 residues: F-actin-capping protein subunit alpha (281 aa).

Belongs to the F-actin-capping protein alpha subunit family. Component of the F-actin capping complex, composed of a heterodimer of an alpha and a beta subunit.

It localises to the cytoplasm. The protein resides in the cytoskeleton. Its function is as follows. F-actin-capping proteins bind in a Ca(2+)-independent manner to the fast growing ends of actin filaments (barbed end) thereby blocking the exchange of subunits at these ends. Unlike other capping proteins (such as gelsolin and severin), these proteins do not sever actin filaments. This Dictyostelium discoideum (Social amoeba) protein is F-actin-capping protein subunit alpha (acpB).